The sequence spans 336 residues: tRNA N6-adenosine threonylcarbamoyltransferase (336 aa).

2 residues coordinate Fe cation: histidine 112 and histidine 116. Residues 136–140 (LVSGG), aspartate 169, glycine 182, and asparagine 276 each bind substrate. A Fe cation-binding site is contributed by aspartate 304.

Belongs to the KAE1 / TsaD family. Fe(2+) is required as a cofactor.

Its subcellular location is the cytoplasm. The catalysed reaction is L-threonylcarbamoyladenylate + adenosine(37) in tRNA = N(6)-L-threonylcarbamoyladenosine(37) in tRNA + AMP + H(+). Its function is as follows. Required for the formation of a threonylcarbamoyl group on adenosine at position 37 (t(6)A37) in tRNAs that read codons beginning with adenine. Is involved in the transfer of the threonylcarbamoyl moiety of threonylcarbamoyl-AMP (TC-AMP) to the N6 group of A37, together with TsaE and TsaB. TsaD likely plays a direct catalytic role in this reaction. This is tRNA N6-adenosine threonylcarbamoyltransferase from Francisella tularensis subsp. holarctica (strain LVS).